The following is an 848-amino-acid chain: DNA mismatch repair protein MutS (848 aa).

Position 605 to 612 (605 to 612 (GPNMAGKS)) interacts with ATP.

The protein belongs to the DNA mismatch repair MutS family.

This protein is involved in the repair of mismatches in DNA. It is possible that it carries out the mismatch recognition step. This protein has a weak ATPase activity. This is DNA mismatch repair protein MutS from Leptospira borgpetersenii serovar Hardjo-bovis (strain JB197).